The chain runs to 425 residues: Probable proline--tRNA ligase, mitochondrial (425 aa).

This sequence belongs to the class-II aminoacyl-tRNA synthetase family.

It is found in the mitochondrion. The catalysed reaction is tRNA(Pro) + L-proline + ATP = L-prolyl-tRNA(Pro) + AMP + diphosphate. The chain is Probable proline--tRNA ligase, mitochondrial from Schizosaccharomyces pombe (strain 972 / ATCC 24843) (Fission yeast).